A 137-amino-acid polypeptide reads, in one-letter code: Large ribosomal subunit protein uL16 (137 aa).

Positions 1-16 are enriched in basic residues; sequence MLQPKRTKFRKMQKGR. The segment at 1 to 22 is disordered; sequence MLQPKRTKFRKMQKGRIRGEAK.

The protein belongs to the universal ribosomal protein uL16 family. As to quaternary structure, part of the 50S ribosomal subunit.

Functionally, binds 23S rRNA and is also seen to make contacts with the A and possibly P site tRNAs. The chain is Large ribosomal subunit protein uL16 from Jannaschia sp. (strain CCS1).